The following is a 220-amino-acid chain: Large ribosomal subunit protein bL21c (220 aa).

It belongs to the bacterial ribosomal protein bL21 family. As to quaternary structure, part of the 50S ribosomal subunit.

The protein localises to the plastid. It localises to the chloroplast. In terms of biological role, this protein binds to 23S ribosomal RNA in the presence of protein L20. The protein is Large ribosomal subunit protein bL21c (RPL21) of Arabidopsis thaliana (Mouse-ear cress).